Here is a 108-residue protein sequence, read N- to C-terminus: Probable endonuclease 4 (108 aa).

Zn(2+) contacts are provided by histidine 2, histidine 36, aspartate 49, histidine 51, and glutamate 81.

It belongs to the AP endonuclease 2 family. Requires Zn(2+) as cofactor.

The catalysed reaction is Endonucleolytic cleavage to 5'-phosphooligonucleotide end-products.. Its function is as follows. Endonuclease IV plays a role in DNA repair. It cleaves phosphodiester bonds at apurinic or apyrimidinic (AP) sites, generating a 3'-hydroxyl group and a 5'-terminal sugar phosphate. This Thermotoga neapolitana protein is Probable endonuclease 4 (nfo).